We begin with the raw amino-acid sequence, 78 residues long: Antitoxin VapB27 (78 aa).

In terms of domain architecture, SpoVT-AbrB spans 1 to 45; the sequence is MKAVVDAAGRIVVPKPLREALGLQPGSTVEISRYGAGLHLIPTGR.

The protein belongs to the VapB family. As to quaternary structure, interacts with cognate toxin VapC27 and non-cognate toxins MazF6 and VapC40. Interaction with MazF6 and MazF9 partially neutralizes the toxins.

Its function is as follows. Antitoxin component of a type II toxin-antitoxin (TA) system. Cognate toxin is VapC27. Upon expression in E.coli partially counteracts the ribonuclease activity of non-cognate toxins MazF6 and MazF9. In Mycobacterium tuberculosis (strain ATCC 25618 / H37Rv), this protein is Antitoxin VapB27 (vapB27).